The primary structure comprises 296 residues: tRNA dimethylallyltransferase (296 aa).

9 to 16 (GTTASGKS) lines the ATP pocket. Residue 11–16 (TASGKS) coordinates substrate. The tract at residues 34-37 (DSLA) is interaction with substrate tRNA.

Belongs to the IPP transferase family. In terms of assembly, monomer. Mg(2+) is required as a cofactor.

It carries out the reaction adenosine(37) in tRNA + dimethylallyl diphosphate = N(6)-dimethylallyladenosine(37) in tRNA + diphosphate. Its function is as follows. Catalyzes the transfer of a dimethylallyl group onto the adenine at position 37 in tRNAs that read codons beginning with uridine, leading to the formation of N6-(dimethylallyl)adenosine (i(6)A). The polypeptide is tRNA dimethylallyltransferase (Campylobacter curvus (strain 525.92)).